The primary structure comprises 396 residues: Obg-like ATPase 1 (396 aa).

The OBG-type G domain maps to 23–283; that stretch reads LKIGIVGLPN…LSAEERQKYL (261 aa). Residue 32–37 coordinates ATP; it reads NVGKST. 2 residues coordinate Mg(2+): Ser-36 and Thr-56. An ATP-binding site is contributed by Leu-231. The Nuclear export signal signature appears at 267-274; the sequence is LELKLQEL. Lys-294 carries the post-translational modification N6-acetyllysine. Positions 304-387 constitute a TGS domain; that stretch reads QLEYFFTAGP…EDGDIIFFKF (84 aa).

This sequence belongs to the TRAFAC class OBG-HflX-like GTPase superfamily. OBG GTPase family. YchF/OLA1 subfamily. In terms of assembly, monomer. Requires Mg(2+) as cofactor. As to expression, expressed in all tissues tested but its expression is more abundant in testis, liver, lung, and brain. Overexpressed in several malignancies, including cancers of the colon, rectum, ovary, lung, stomach, and uterus.

Its subcellular location is the cytoplasm. It is found in the nucleus. The protein resides in the nucleolus. Hydrolyzes ATP, and can also hydrolyze GTP with lower efficiency. Has lower affinity for GTP. This Homo sapiens (Human) protein is Obg-like ATPase 1.